Consider the following 353-residue polypeptide: Photosystem II protein D1 (353 aa).

Position 2 is an N-acetylthreonine (Thr2). Thr2 bears the Phosphothreonine mark. Transmembrane regions (helical) follow at residues 29 to 46 (YIGW…TATS), 118 to 133 (HFLL…EWEL), and 142 to 156 (WIAV…AATA). Residue His118 coordinates chlorophyll a. Tyr126 provides a ligand contact to pheophytin a. Asp170 and Glu189 together coordinate [CaMn4O5] cluster. A helical membrane pass occupies residues 197 to 218 (FHMLGVAGVFGGSLFSAMHGSL). Residue His198 coordinates chlorophyll a. A quinone is bound by residues His215 and 264–265 (SF). His215 lines the Fe cation pocket. Fe cation is bound at residue His272. Residues 274-288 (FLAAWPVVGIWFTAL) form a helical membrane-spanning segment. Positions 332, 333, 342, and 344 each coordinate [CaMn4O5] cluster. A propeptide spanning residues 345–353 (SVELDSIDG) is cleaved from the precursor.

This sequence belongs to the reaction center PufL/M/PsbA/D family. PSII is composed of 1 copy each of membrane proteins PsbA, PsbB, PsbC, PsbD, PsbE, PsbF, PsbH, PsbI, PsbJ, PsbK, PsbL, PsbM, PsbT, PsbX, PsbY, PsbZ, Psb30/Ycf12, at least 3 peripheral proteins of the oxygen-evolving complex and a large number of cofactors. It forms dimeric complexes. The cofactor is The D1/D2 heterodimer binds P680, chlorophylls that are the primary electron donor of PSII, and subsequent electron acceptors. It shares a non-heme iron and each subunit binds pheophytin, quinone, additional chlorophylls, carotenoids and lipids. D1 provides most of the ligands for the Mn4-Ca-O5 cluster of the oxygen-evolving complex (OEC). There is also a Cl(-1) ion associated with D1 and D2, which is required for oxygen evolution. The PSII complex binds additional chlorophylls, carotenoids and specific lipids.. Tyr-161 forms a radical intermediate that is referred to as redox-active TyrZ, YZ or Y-Z. Post-translationally, C-terminally processed by CTPA; processing is essential to allow assembly of the oxygen-evolving complex and thus photosynthetic growth.

The protein localises to the plastid. It localises to the chloroplast thylakoid membrane. The enzyme catalyses 2 a plastoquinone + 4 hnu + 2 H2O = 2 a plastoquinol + O2. Photosystem II (PSII) is a light-driven water:plastoquinone oxidoreductase that uses light energy to abstract electrons from H(2)O, generating O(2) and a proton gradient subsequently used for ATP formation. It consists of a core antenna complex that captures photons, and an electron transfer chain that converts photonic excitation into a charge separation. The D1/D2 (PsbA/PsbD) reaction center heterodimer binds P680, the primary electron donor of PSII as well as several subsequent electron acceptors. This Gnetum parvifolium (Small-leaved jointfir) protein is Photosystem II protein D1.